The following is a 662-amino-acid chain: Histidine decarboxylase (662 aa).

Positions 81 and 194 each coordinate substrate. An N6-(pyridoxal phosphate)lysine modification is found at lysine 305.

It belongs to the group II decarboxylase family. In terms of assembly, homodimer. It depends on pyridoxal 5'-phosphate as a cofactor.

The enzyme catalyses L-histidine + H(+) = histamine + CO2. The protein operates within amine and polyamine biosynthesis; histamine biosynthesis; histamine from L-histidine: step 1/1. In terms of biological role, catalyzes the biosynthesis of histamine from histidine. This Homo sapiens (Human) protein is Histidine decarboxylase (HDC).